We begin with the raw amino-acid sequence, 104 residues long: Large ribosomal subunit protein uL24 (104 aa).

This sequence belongs to the universal ribosomal protein uL24 family. In terms of assembly, part of the 50S ribosomal subunit.

In terms of biological role, one of two assembly initiator proteins, it binds directly to the 5'-end of the 23S rRNA, where it nucleates assembly of the 50S subunit. One of the proteins that surrounds the polypeptide exit tunnel on the outside of the subunit. The sequence is that of Large ribosomal subunit protein uL24 from Methylorubrum extorquens (strain PA1) (Methylobacterium extorquens).